A 713-amino-acid polypeptide reads, in one-letter code: B3 domain-containing transcription factor VAL3 (713 aa).

Positions 328–427 form a DNA-binding region, TF-B3; that stretch reads FEKILSATDT…KLILGFRKAS (100 aa). 2 disordered regions span residues 459 to 478 and 616 to 713; these read VECS…SKRQ and LNSD…TSSM. Positions 464-477 are enriched in basic residues; sequence GKKKSSMMITRSKR. A compositionally biased stretch (polar residues) spans 616 to 629; sequence LNSDNGLHQSANNS. The span at 663–674 shows a compositional bias: basic and acidic residues; it reads TKSETLPHDDTV. Residues 676 to 688 are compositionally biased toward low complexity; the sequence is SSFTSPSSSSAHS. Over residues 690 to 700 the composition is skewed to basic and acidic residues; that stretch reads NNKEDEGKLKT. A compositionally biased stretch (low complexity) spans 701 to 713; that stretch reads TTEIADTTTTSSM.

Its subcellular location is the nucleus. In terms of biological role, may be involved in plant development. This chain is B3 domain-containing transcription factor VAL3 (VAL3), found in Arabidopsis thaliana (Mouse-ear cress).